We begin with the raw amino-acid sequence, 142 residues long: Small heat shock protein IbpB (142 aa).

The region spanning 26–137 (SGESQSFPPY…PPQRIAINER (112 aa)) is the sHSP domain.

The protein belongs to the small heat shock protein (HSP20) family. In terms of assembly, homodimer. Forms homomultimers of about 100-150 subunits at optimal growth temperatures. Conformation changes to oligomers at high temperatures or high ionic concentrations. The decrease in size of the multimers is accompanied by an increase in chaperone activity.

The protein resides in the cytoplasm. Associates with aggregated proteins, together with IbpA, to stabilize and protect them from irreversible denaturation and extensive proteolysis during heat shock and oxidative stress. Aggregated proteins bound to the IbpAB complex are more efficiently refolded and reactivated by the ATP-dependent chaperone systems ClpB and DnaK/DnaJ/GrpE. Its activity is ATP-independent. This chain is Small heat shock protein IbpB, found in Salmonella typhi.